The sequence spans 211 residues: SOSS complex subunit B2 (211 aa).

A DNA-binding region (OB) is located at residues 27-97 (IVLEIGRVTK…TLYTGRGGDL (71 aa)). The tract at residues 125–211 (NQQNKTSKEQ…GRDPRRASKR (87 aa)) is disordered. The span at 136 to 157 (GNSPPNQNAGNGTVPVFSNNNA) shows a compositional bias: polar residues. Residues 179 to 195 (NGPPPVTAGGTPAPPKP) show a composition bias toward pro residues.

Belongs to the SOSS-B family. SOSS-B2 subfamily. In terms of assembly, component of the SOSS complex, composed of soss-b (soss-b1/nabp2 or soss-b2/nabp1), soss-a/ints3 and soss-c/inip. SOSS complexes containing soss-b1/nabp2 are more abundant than complexes containing soss-b2/nabp1.

The protein localises to the nucleus. Its function is as follows. Component of the SOSS complex, a multiprotein complex that functions downstream of the MRN complex to promote DNA repair and G2/M checkpoint. In the SOSS complex, acts as a sensor of single-stranded DNA that binds to single-stranded DNA. The SOSS complex associates with DNA lesions and influences diverse endpoints in the cellular DNA damage response including cell-cycle checkpoint activation, recombinational repair and maintenance of genomic stability. Required for efficient homologous recombination-dependent repair of double-strand breaks (DSBs). The protein is SOSS complex subunit B2 (nabp1) of Danio rerio (Zebrafish).